Here is a 279-residue protein sequence, read N- to C-terminus: 3-methyl-2-oxobutanoate hydroxymethyltransferase (279 aa).

Positions 43 and 82 each coordinate Mg(2+). 3-methyl-2-oxobutanoate-binding positions include 43–44 (DS), aspartate 82, and lysine 112. Mg(2+) is bound at residue glutamate 114. The active-site Proton acceptor is glutamate 181.

This sequence belongs to the PanB family. As to quaternary structure, homodecamer; pentamer of dimers. It depends on Mg(2+) as a cofactor.

It is found in the cytoplasm. The enzyme catalyses 3-methyl-2-oxobutanoate + (6R)-5,10-methylene-5,6,7,8-tetrahydrofolate + H2O = 2-dehydropantoate + (6S)-5,6,7,8-tetrahydrofolate. It functions in the pathway cofactor biosynthesis; (R)-pantothenate biosynthesis; (R)-pantoate from 3-methyl-2-oxobutanoate: step 1/2. Functionally, catalyzes the reversible reaction in which hydroxymethyl group from 5,10-methylenetetrahydrofolate is transferred onto alpha-ketoisovalerate to form ketopantoate. This is 3-methyl-2-oxobutanoate hydroxymethyltransferase from Geobacillus sp. (strain WCH70).